Here is a 283-residue protein sequence, read N- to C-terminus: NAD kinase (283 aa).

The active-site Proton acceptor is D66. NAD(+) contacts are provided by residues D66–G67, N140–D141, R151, R168, D170, and Q240.

It belongs to the NAD kinase family. A divalent metal cation is required as a cofactor.

It is found in the cytoplasm. It catalyses the reaction NAD(+) + ATP = ADP + NADP(+) + H(+). Its function is as follows. Involved in the regulation of the intracellular balance of NAD and NADP, and is a key enzyme in the biosynthesis of NADP. Catalyzes specifically the phosphorylation on 2'-hydroxyl of the adenosine moiety of NAD to yield NADP. The sequence is that of NAD kinase from Syntrophobacter fumaroxidans (strain DSM 10017 / MPOB).